The following is an 8515-amino-acid chain: Nonribosomal peptide synthetase 8 (8515 aa).

Adenylation regions lie at residues 59–736 (REHH…YRCS) and 1163–1705 (AKLS…EWVE). The segment at 587–1159 (RRVVQWLENL…TVGEVALVGD (573 aa)) is condensation 1. The Carrier 1 domain maps to 615–691 (EPETAMERRL…ELAPRVKVAE (77 aa)). O-(pantetheine 4'-phosphoryl)serine is present on Ser-652. In terms of domain architecture, Carrier 2 spans 1732–1808 (RGLTPTETVI…KLGRHADHSS (77 aa)). An O-(pantetheine 4'-phosphoryl)serine modification is found at Ser-1769. The segment at 1830–2273 (LSPIQQWFFE…TLYDCPLAAL (444 aa)) is epimerase 1. The segment at 2301-2709 (SHIQEGILLS…RSPEAVLHDL (409 aa)) is condensation 2. The tract at residues 2733–3266 (QCLHWLIEQW…RMILSWLSEP (534 aa)) is adenylation 3. The Carrier 3 domain occupies 3286–3362 (TTLGPVEKQM…KVTPRTISLS (77 aa)). Ser-3323 carries the O-(pantetheine 4'-phosphoryl)serine modification. The segment at 3406–3819 (SPMQEGILLA…DNSGCSVKTV (414 aa)) is condensation 3. One can recognise a Carrier 4 domain in the interval 3857-3933 (EPTNLIALTV…EVFEHARFSD (77 aa)). Ser-3894 carries the O-(pantetheine 4'-phosphoryl)serine modification. Residues 3953 to 4392 (LSPIQKLHFH…TPSDFQLLSL (440 aa)) are epimerase 2. The tract at residues 4420-4823 (PCSPMQEGIL…ARPRARLGTI (404 aa)) is condensation 4. The adenylation 4 stretch occupies residues 4837–5363 (WNEQARRPVV…RKVNKWLESF (527 aa)). Residues 5385–5461 (PPLTPIQQTI…SLAACATAII (77 aa)) enclose the Carrier 5 domain. Ser-5422 is modified (O-(pantetheine 4'-phosphoryl)serine). Residues 5508–5923 (SPMQEGILFS…SLVDHLSLCS (416 aa)) form a condensation 5 region. The adenylation 5 stretch occupies residues 5941 to 6459 (ELRQCLHELI…GKVDRQALRR (519 aa)). The Carrier 6 domain maps to 6482–6558 (PISTAEEQQM…DLATLLESPA (77 aa)). Ser-6519 carries the post-translational modification O-(pantetheine 4'-phosphoryl)serine. The segment at 6606–6992 (CTPLQESLMA…SQMKSVMGTL (387 aa)) is condensation 6. Residues 7030 to 7544 (VEDLIISRAQ…SSGKLARKGV (515 aa)) are adenylation 6. One can recognise a Carrier 7 domain in the interval 7575–7651 (IASSSVERAI…HLASREDLTA (77 aa)). An O-(pantetheine 4'-phosphoryl)serine modification is found at Ser-7612. The segment at 7670–8119 (LTPIQRFFFC…DYPRARLDYT (450 aa)) is epimerase 3. The interval 8164-8504 (HFIWKIAGTK…DPTSPLQFAD (341 aa)) is condensation 7. Polar residues predominate over residues 8488–8500 (AVNSVSSDPTSPL). Residues 8488–8515 (AVNSVSSDPTSPLQFADGQDPMPVSHQP) are disordered.

The protein belongs to the NRP synthetase family.

In terms of biological role, nonribosomal peptide synthesis (NRPS) is a key mechanism responsible for the biosynthesis of bioactive metabolites which are potentially contributing to organismal virulence. However, contarary to other nonribosomal peptide synthases, NRPS8 does not encode a secreted peptide, but has more a structural role since it is involved in germ tube formation. This chain is Nonribosomal peptide synthetase 8 (NRPS8), found in Aspergillus fumigatus (strain ATCC MYA-4609 / CBS 101355 / FGSC A1100 / Af293) (Neosartorya fumigata).